Consider the following 396-residue polypeptide: L-lactate dehydrogenase (396 aa).

An FMN hydroxy acid dehydrogenase domain is found at 1-380; the sequence is MIISAASDYR…SGDSLVQELG (380 aa). Tyr24 lines the substrate pocket. Residues Ser106 and Gln127 each contribute to the FMN site. Substrate is bound at residue Tyr129. Thr155 lines the FMN pocket. Arg164 serves as a coordination point for substrate. Lys251 is a binding site for FMN. His275 serves as the catalytic Proton acceptor. Arg278 lines the substrate pocket. An FMN-binding site is contributed by 306–330; that stretch reads DSGIRNGLDVVRMIALGADTVLLGR.

The protein belongs to the FMN-dependent alpha-hydroxy acid dehydrogenase family. The cofactor is FMN.

It localises to the cell inner membrane. The enzyme catalyses (S)-lactate + A = pyruvate + AH2. Catalyzes the conversion of L-lactate to pyruvate. Is coupled to the respiratory chain. This is L-lactate dehydrogenase from Salmonella schwarzengrund (strain CVM19633).